A 400-amino-acid polypeptide reads, in one-letter code: Keratin, type I cytoskeletal 19 (400 aa).

Positions 1 to 79 (MTSYSYRQSS…TASDGLLAGN (79 aa)) are head. At arginine 7 the chain carries Omega-N-methylarginine. 2 positions are modified to phosphoserine: serine 14 and serine 22. Arginine 24 bears the Asymmetric dimethylarginine; alternate mark. Position 24 is an omega-N-methylarginine; alternate (arginine 24). Omega-N-methylarginine is present on arginine 32. Residues serine 35 and serine 40 each carry the phosphoserine modification. 2 positions are modified to omega-N-methylarginine: arginine 43 and arginine 51. Residues serine 57 and serine 72 each carry the phosphoserine modification. Positions 80–115 (EKLTMQNLNDRLASYLDKVRALEAANGELEVKIRDW) are coil 1A. In terms of domain architecture, IF rod spans 80–391 (EKLTMQNLND…SLLEGQEDHY (312 aa)). The linker 1 stretch occupies residues 116–133 (YQKQGPGPSRDYSHYYTT). Residues 134 to 225 (IQDLRDKILG…KNHEEEISTL (92 aa)) form a coil 1B region. The segment at 226-248 (RGQVGGQVSVEVDSAPGTDLAKI) is linker 12. Residues 244-390 (DLAKILSDMR…RSLLEGQEDH (147 aa)) form a necessary for interaction with PNN region. The tract at residues 249–387 (LSDMRSQYEV…ATYRSLLEGQ (139 aa)) is coil 2. A Phosphothreonine modification is found at threonine 323. Residues 388 to 400 (EDHYSNLSASKVL) form a rod-like helical tail region. Tyrosine 391 carries the post-translational modification Phosphotyrosine. At serine 395 the chain carries Phosphoserine.

This sequence belongs to the intermediate filament family. As to quaternary structure, heterotetramer of two type I and two type II keratins. Interacts with PNN and the actin-binding domain of DMD.

Involved in the organization of myofibers. Together with KRT8, helps to link the contractile apparatus to dystrophin at the costameres of striated muscle. The sequence is that of Keratin, type I cytoskeletal 19 from Pongo abelii (Sumatran orangutan).